We begin with the raw amino-acid sequence, 193 residues long: Tellurium resistance protein TerZ (193 aa).

It belongs to the CAPAB/TerDEXZ family.

Its function is as follows. Not known; seems to contribute to the tellurium resistance (Ter) mechanism. Also involved in phage inhibition (Phi) and colicin resistance (PacB). The sequence is that of Tellurium resistance protein TerZ (terZ) from Serratia marcescens.